A 318-amino-acid chain; its full sequence is Thymidylate synthase (318 aa).

Residues Arg-25 and 180–181 each bind dUMP; that span reads RR. Cys-200 serves as the catalytic Nucleophile. DUMP is bound by residues 220–223, Asn-231, and 261–263; these read RSAD and HIY. Asp-223 is a (6R)-5,10-methylene-5,6,7,8-tetrahydrofolate binding site. Residue Ala-317 coordinates (6R)-5,10-methylene-5,6,7,8-tetrahydrofolate.

The protein belongs to the thymidylate synthase family. Bacterial-type ThyA subfamily. Homodimer.

It is found in the cytoplasm. It catalyses the reaction dUMP + (6R)-5,10-methylene-5,6,7,8-tetrahydrofolate = 7,8-dihydrofolate + dTMP. The protein operates within pyrimidine metabolism; dTTP biosynthesis. Functionally, catalyzes the reductive methylation of 2'-deoxyuridine-5'-monophosphate (dUMP) to 2'-deoxythymidine-5'-monophosphate (dTMP) while utilizing 5,10-methylenetetrahydrofolate (mTHF) as the methyl donor and reductant in the reaction, yielding dihydrofolate (DHF) as a by-product. This enzymatic reaction provides an intracellular de novo source of dTMP, an essential precursor for DNA biosynthesis. The chain is Thymidylate synthase from Ligilactobacillus salivarius (strain UCC118) (Lactobacillus salivarius).